A 143-amino-acid polypeptide reads, in one-letter code: MLMGEYQHNIDAKGRLIVPSKFREELGEKFVVTRGMDGCLFGYPLNEWSQLEAKLQEMPLAKKDARTFVRFFYSAATECEIDKQGRINIPANLRTHASLEKGCVVIGVSNRIEIWSDERWHAFSDEAEENFDELAETMIDFGF.

SpoVT-AbrB domains lie at 5 to 47 (EYQH…PLNE) and 76 to 119 (ATEC…SDER).

It belongs to the MraZ family. In terms of assembly, forms oligomers.

It localises to the cytoplasm. The protein localises to the nucleoid. In Enterococcus faecalis (strain ATCC 700802 / V583), this protein is Transcriptional regulator MraZ.